The primary structure comprises 379 residues: Homoserine O-acetyltransferase (379 aa).

The AB hydrolase-1 domain occupies 52–356 (NVVVVLHALT…VYGHDGFLVE (305 aa)). Ser-157 functions as the Nucleophile in the catalytic mechanism. Arg-227 contributes to the substrate binding site. Residues Asp-320 and His-350 contribute to the active site. Asp-351 contacts substrate.

This sequence belongs to the AB hydrolase superfamily. MetX family. Homodimer.

The protein localises to the cytoplasm. It catalyses the reaction L-homoserine + acetyl-CoA = O-acetyl-L-homoserine + CoA. The protein operates within amino-acid biosynthesis; L-methionine biosynthesis via de novo pathway; O-acetyl-L-homoserine from L-homoserine: step 1/1. In terms of biological role, transfers an acetyl group from acetyl-CoA to L-homoserine, forming acetyl-L-homoserine. The chain is Homoserine O-acetyltransferase from Mycobacterium bovis (strain ATCC BAA-935 / AF2122/97).